The primary structure comprises 546 residues: Probable protein kinase UbiB (546 aa).

The Protein kinase domain occupies 124 to 502 (DFEIKPLASA…HVRQGQSRYF (379 aa)). Residues 130 to 138 (LASASIAQV) and lysine 153 each bind ATP. Aspartate 288 (proton acceptor) is an active-site residue. Helical transmembrane passes span 501-521 (YFLG…VSRP) and 522-542 (EWGL…FVGW).

It belongs to the ABC1 family. UbiB subfamily.

The protein resides in the cell inner membrane. The protein operates within cofactor biosynthesis; ubiquinone biosynthesis [regulation]. Is probably a protein kinase regulator of UbiI activity which is involved in aerobic coenzyme Q (ubiquinone) biosynthesis. This is Probable protein kinase UbiB from Shigella boydii serotype 18 (strain CDC 3083-94 / BS512).